The primary structure comprises 149 residues: Transcriptional repressor NrdR (149 aa).

The segment at 3–34 is a zinc-finger region; it reads CPFCSAVDTKVIDSRLVGEGSQVRRRRQCLVC. The region spanning 49 to 139 is the ATP-cone domain; the sequence is PRVIKSNEVR…VYRSFEDIRE (91 aa).

It belongs to the NrdR family. It depends on Zn(2+) as a cofactor.

Functionally, negatively regulates transcription of bacterial ribonucleotide reductase nrd genes and operons by binding to NrdR-boxes. The chain is Transcriptional repressor NrdR from Pectobacterium atrosepticum (strain SCRI 1043 / ATCC BAA-672) (Erwinia carotovora subsp. atroseptica).